Consider the following 687-residue polypeptide: MAKELFLEIGTEEIPAGFLPKAMADMEGLIRKELESARIGFGEVKTMATPRRLALVVKNVSAQQTDAEITTMGPAKKVAFNDDGTTTKAGEGFARGQGVDASALSIIATEKGEYVAVTKKEIGVATAGLLAEILPRLINNIPFKKSMRWGDQEVRFARPMHWIVALFDGTVIPFAFGNVQSGSMSRGHRFMANTSFPVRDFGHYLEECERHFVIPDPAKRKEIISREIERVAKAAGGNVLPDEGLLEQVTYLVEYPSAVHGTFSAEFLAVPKEVLITSMREHQRYFSLVDDKGKLLPGFITINNTLTEDPSVVVKGNEMVLRARLSDARFFFEEDKKVPLEKRVEALKSVLYQAKLGTSYEKMERFRTLAEGLAEQLQPPLKAKVFQAATLCKADLVTGMVGEFPEVQGIMGREYALLQGVDAEVARAIAEHYLPNQAGGELPASDTGAFVSIADKVDTICGCFSVGLIPSGSADPYALRRAALGIINIILAKGYNLPLIPLVTKAIGQLEGRLTRKKEEVLADVLDFFKGRFINLLTDRFPADVVEAVVAVSFDNLVEATAKIEALAQFKKRDDFEPLAVAFKRVCNIVKEQVTVPVDDKLFQDAAEGTLFQSFKSASSMVEEKVVQREYLAALTQIASLKGAVDDFFDKVMVMAEDEGVRNNRLALLQEIKSLFRDIADFGKLTA.

It belongs to the class-II aminoacyl-tRNA synthetase family. In terms of assembly, tetramer of two alpha and two beta subunits.

The protein resides in the cytoplasm. The enzyme catalyses tRNA(Gly) + glycine + ATP = glycyl-tRNA(Gly) + AMP + diphosphate. In Geotalea daltonii (strain DSM 22248 / JCM 15807 / FRC-32) (Geobacter daltonii), this protein is Glycine--tRNA ligase beta subunit.